Here is a 226-residue protein sequence, read N- to C-terminus: 2,3-bisphosphoglycerate-dependent phosphoglycerate mutase (226 aa).

Residues 8-15 (RHGQSQWN), 21-22 (TG), arginine 58, 112-115 (ERMY), lysine 123, 139-140 (RR), and 183-184 (GN) contribute to the substrate site. Histidine 9 functions as the Tele-phosphohistidine intermediate in the catalytic mechanism. The active-site Proton donor/acceptor is the glutamate 112.

Belongs to the phosphoglycerate mutase family. BPG-dependent PGAM subfamily.

It carries out the reaction (2R)-2-phosphoglycerate = (2R)-3-phosphoglycerate. It participates in carbohydrate degradation; glycolysis; pyruvate from D-glyceraldehyde 3-phosphate: step 3/5. In terms of biological role, catalyzes the interconversion of 2-phosphoglycerate and 3-phosphoglycerate. This Protochlamydia amoebophila (strain UWE25) protein is 2,3-bisphosphoglycerate-dependent phosphoglycerate mutase.